The sequence spans 608 residues: Zinc finger protein 652 (608 aa).

S57 is modified (phosphoserine). Positions 61–232 (VLADTKMSKP…KRATKEAKAP (172 aa)) are disordered. Basic and acidic residues predominate over residues 71–97 (HLHETEEQPYFREPRAVSDVHTVKEDR). Composition is skewed to acidic residues over residues 98-108 (ENSDDTEEEEE) and 151-162 (EEDEEETEEEAT). Position 100 is a phosphoserine (S100). T103 is modified (phosphothreonine). The span at 194–208 (AASAAAATTSPAPRT) shows a compositional bias: low complexity. S196 and S203 each carry phosphoserine. The segment at 244-267 (LTCEKCPRVFNTRWYLEKHMNVTH) adopts a C2H2-type 1 zinc-finger fold. A C2H2-type 2; degenerate zinc finger spans residues 271–293 (QICDKCGKKFVLESELSLHQQTD). C2H2-type zinc fingers lie at residues 298-321 (IQCVSCNKSFKKLWSLHEHIKIVH), 328-350 (FACEICEKKFYTMAHVRKHMVAH), 356-378 (FTCETCGKSFKRSMSLKVHSLQH), 384-406 (FRCENCDERFQYKYQLRSHMSIH), 412-434 (FMCQWCGKDFNMKQYFDEHMKTH), and 440-462 (FICEICGKSFTSRPNMKRHRRTH). A C2H2-type 9; degenerate zinc finger spans residues 468 to 491 (YPCDVCGQRFRFSNMLKAHKEKCF). Positions 497 to 608 (VNVPPAVQIP…KNSAAPAQHH (112 aa)) are mediates interaction with CBFA2T3.

This sequence belongs to the krueppel C2H2-type zinc-finger protein family. As to quaternary structure, interacts with CBFA2T3.

It localises to the nucleus. Functions as a transcriptional repressor. The sequence is that of Zinc finger protein 652 (Znf652) from Mus musculus (Mouse).